Consider the following 707-residue polypeptide: Protein kinase C theta type (707 aa).

A C2 domain is found at 1 to 107; it reads MSPFLRIGLS…KNNGRTEIWL (107 aa). Y90 carries the phosphotyrosine; by LCK modification. The segment at 159–209 adopts a Phorbol-ester/DAG-type 1 zinc-finger fold; that stretch reads CHEFTATFFPQPTFCSVCHEFVWGLNKQGYQCRRCNAAIHKKCIDKVIAKC. The residue at position 219 (T219) is a Phosphothreonine; by autocatalysis. The Phorbol-ester/DAG-type 2 zinc-finger motif lies at 231 to 281; the sequence is PHRFKVYNYKSPTFCEHCGTLLWGLARQGLKCDACGMNVHHRCQTKVANLC. S348 bears the Phosphoserine mark. One can recognise a Protein kinase domain in the interval 380-634; that stretch reads FILHKMLGKG…RGDIRQHPLF (255 aa). Residues 386 to 394 and K409 each bind ATP; that span reads LGKGSFGKV. The active-site Proton acceptor is D504. A Phosphothreonine; by PDPK1 modification is found at T538. One can recognise an AGC-kinase C-terminal domain in the interval 635-706; sequence REINWEELER…INPGMETLIC (72 aa). Phosphoserine occurs at positions 676 and 685. Residue S695 is modified to Phosphoserine; by autocatalysis.

This sequence belongs to the protein kinase superfamily. AGC Ser/Thr protein kinase family. PKC subfamily. In terms of assembly, part of a membrane raft complex composed at least of BCL10, CARD11, MALT1 and IKBKB. Interacts with GLRX3 (via N-terminus). Interacts with ECT2. Interacts with CCDC88A/GIV; the interaction leads to phosphorylation of CCDC88A and inhibition of its guanine nucleotide exchange factor activity. Interacts with CD28. The cofactor is Mg(2+). In terms of processing, autophosphorylation at Thr-219 is required for targeting to the TCR and cellular function of PRKCQ upon antigen receptor ligation. Following TCR stimulation, phosphorylated at Tyr-90 and Ser-685.

Its subcellular location is the cytoplasm. It localises to the cell membrane. The catalysed reaction is L-seryl-[protein] + ATP = O-phospho-L-seryl-[protein] + ADP + H(+). The enzyme catalyses L-threonyl-[protein] + ATP = O-phospho-L-threonyl-[protein] + ADP + H(+). Its activity is regulated as follows. Novel PKCs (PRKCD, PRKCE, PRKCH and PRKCQ) are calcium-insensitive, but activated by diacylglycerol (DAG) and phosphatidylserine. Three specific sites; Thr-538 (activation loop of the kinase domain), Ser-676 (turn motif) and Ser-695 (hydrophobic region), need to be phosphorylated for its full activation. Functionally, calcium-independent, phospholipid- and diacylglycerol (DAG)-dependent serine/threonine-protein kinase that mediates non-redundant functions in T-cell receptor (TCR) signaling, including T-cells activation, proliferation, differentiation and survival, by mediating activation of multiple transcription factors such as NF-kappa-B, JUN, NFATC1 and NFATC2. In TCR-CD3/CD28-co-stimulated T-cells, is required for the activation of NF-kappa-B and JUN, which in turn are essential for IL2 production, and participates in the calcium-dependent NFATC1 and NFATC2 transactivation. Mediates the activation of the canonical NF-kappa-B pathway (NFKB1) by direct phosphorylation of CARD11 on several serine residues, inducing CARD11 association with lipid rafts and recruitment of the BCL10-MALT1 complex, which then activates IKK complex, resulting in nuclear translocation and activation of NFKB1. May also play an indirect role in activation of the non-canonical NF-kappa-B (NFKB2) pathway. In the signaling pathway leading to JUN activation, acts by phosphorylating the mediator STK39/SPAK and may not act through MAP kinases signaling. Plays a critical role in TCR/CD28-induced NFATC1 and NFATC2 transactivation by participating in the regulation of reduced inositol 1,4,5-trisphosphate generation and intracellular calcium mobilization. After costimulation of T-cells through CD28 can phosphorylate CBLB and is required for the ubiquitination and subsequent degradation of CBLB, which is a prerequisite for the activation of TCR. During T-cells differentiation, plays an important role in the development of T-helper 2 (Th2) cells following immune and inflammatory responses, and, in the development of inflammatory autoimmune diseases, is necessary for the activation of IL17-producing Th17 cells. May play a minor role in Th1 response. Upon TCR stimulation, mediates T-cell protective survival signal by phosphorylating BAD, thus protecting T-cells from BAD-induced apoptosis, and by up-regulating BCL-X(L)/BCL2L1 levels through NF-kappa-B and JUN pathways. In platelets, regulates signal transduction downstream of the ITGA2B, CD36/GP4, F2R/PAR1 and F2RL3/PAR4 receptors, playing a positive role in 'outside-in' signaling and granule secretion signal transduction. May relay signals from the activated ITGA2B receptor by regulating the uncoupling of WASP and WIPF1, thereby permitting the regulation of actin filament nucleation and branching activity of the Arp2/3 complex. May mediate inhibitory effects of free fatty acids on insulin signaling by phosphorylating IRS1, which in turn blocks IRS1 tyrosine phosphorylation and downstream activation of the PI3K/AKT pathway. Phosphorylates MSN (moesin) in the presence of phosphatidylglycerol or phosphatidylinositol. Phosphorylates PDPK1 at 'Ser-504' and 'Ser-532' and negatively regulates its ability to phosphorylate PKB/AKT1. Phosphorylates CCDC88A/GIV and inhibits its guanine nucleotide exchange factor activity. Phosphorylates and activates LRRK1, which phosphorylates RAB proteins involved in intracellular trafficking. The chain is Protein kinase C theta type (Prkcq) from Rattus norvegicus (Rat).